Reading from the N-terminus, the 441-residue chain is Serine hydroxymethyltransferase (441 aa).

Residue 124-126 (GHI) coordinates (6S)-5,6,7,8-tetrahydrofolate. Position 239 is an N6-(pyridoxal phosphate)lysine (K239).

This sequence belongs to the SHMT family. As to quaternary structure, homodimer. Pyridoxal 5'-phosphate serves as cofactor.

The protein localises to the cytoplasm. Its pathway is amino-acid biosynthesis; glycine biosynthesis; glycine from L-serine: step 1/1. Functionally, catalyzes the reversible interconversion of serine and glycine with a modified folate serving as the one-carbon carrier. Also exhibits a pteridine-independent aldolase activity toward beta-hydroxyamino acids, producing glycine and aldehydes, via a retro-aldol mechanism. The chain is Serine hydroxymethyltransferase from Cenarchaeum symbiosum (strain A).